Reading from the N-terminus, the 126-residue chain is Large ribosomal subunit protein bL17 (126 aa).

Belongs to the bacterial ribosomal protein bL17 family. As to quaternary structure, part of the 50S ribosomal subunit. Contacts protein L32.

The sequence is that of Large ribosomal subunit protein bL17 from Laribacter hongkongensis (strain HLHK9).